The primary structure comprises 143 residues: Submaxillary gland androgen-regulated protein 2, isoform delta (143 aa).

The first 22 residues, 1-22 (MKPLCLVFGLCVLIGCFLSSEC), serve as a signal peptide directing secretion. 2 disordered regions span residues 28–52 (GQHD…PDPN) and 116–143 (VPRK…TDSF). Composition is skewed to polar residues over residues 36–45 (LSPSNPSSHF) and 122–143 (NATP…TDSF).

The protein localises to the secreted. In terms of biological role, may play a role in protection or detoxification. This chain is Submaxillary gland androgen-regulated protein 2, isoform delta (Smr2), found in Mus musculus (Mouse).